A 565-amino-acid polypeptide reads, in one-letter code: Sulfite reductase [NADPH] hemoprotein beta-component (565 aa).

The [4Fe-4S] cluster site is built by C429, C435, C474, and C478. Siroheme is bound at residue C478.

This sequence belongs to the nitrite and sulfite reductase 4Fe-4S domain family. As to quaternary structure, alpha(8)-beta(8). The alpha component is a flavoprotein, the beta component is a hemoprotein. Requires siroheme as cofactor. The cofactor is [4Fe-4S] cluster.

The enzyme catalyses hydrogen sulfide + 3 NADP(+) + 3 H2O = sulfite + 3 NADPH + 4 H(+). Its pathway is sulfur metabolism; hydrogen sulfide biosynthesis; hydrogen sulfide from sulfite (NADPH route): step 1/1. Functionally, component of the sulfite reductase complex that catalyzes the 6-electron reduction of sulfite to sulfide. This is one of several activities required for the biosynthesis of L-cysteine from sulfate. This is Sulfite reductase [NADPH] hemoprotein beta-component from Shewanella sp. (strain MR-4).